A 739-amino-acid chain; its full sequence is Elongation factor 2 (739 aa).

The 243-residue stretch at 19–261 (RNIRNIGIIA…MVALHVPDPI (243 aa)) folds into the tr-type G domain. GTP-binding positions include 28-35 (AHVDHGKT), 94-98 (DTPGH), and 148-151 (NKID). Diphthamide is present on histidine 603.

This sequence belongs to the TRAFAC class translation factor GTPase superfamily. Classic translation factor GTPase family. EF-G/EF-2 subfamily.

Its subcellular location is the cytoplasm. Catalyzes the GTP-dependent ribosomal translocation step during translation elongation. During this step, the ribosome changes from the pre-translocational (PRE) to the post-translocational (POST) state as the newly formed A-site-bound peptidyl-tRNA and P-site-bound deacylated tRNA move to the P and E sites, respectively. Catalyzes the coordinated movement of the two tRNA molecules, the mRNA and conformational changes in the ribosome. The chain is Elongation factor 2 from Korarchaeum cryptofilum (strain OPF8).